A 338-amino-acid chain; its full sequence is Biotin synthase (338 aa).

One can recognise a Radical SAM core domain in the interval Gln-50 to Arg-277. [4Fe-4S] cluster-binding residues include Cys-65, Cys-69, and Cys-72. [2Fe-2S] cluster is bound by residues Cys-109, Cys-140, Cys-200, and Arg-272.

The protein belongs to the radical SAM superfamily. Biotin synthase family. As to quaternary structure, homodimer. The cofactor is [4Fe-4S] cluster. [2Fe-2S] cluster serves as cofactor.

It carries out the reaction (4R,5S)-dethiobiotin + (sulfur carrier)-SH + 2 reduced [2Fe-2S]-[ferredoxin] + 2 S-adenosyl-L-methionine = (sulfur carrier)-H + biotin + 2 5'-deoxyadenosine + 2 L-methionine + 2 oxidized [2Fe-2S]-[ferredoxin]. It participates in cofactor biosynthesis; biotin biosynthesis; biotin from 7,8-diaminononanoate: step 2/2. In terms of biological role, catalyzes the conversion of dethiobiotin (DTB) to biotin by the insertion of a sulfur atom into dethiobiotin via a radical-based mechanism. In Actinobacillus succinogenes (strain ATCC 55618 / DSM 22257 / CCUG 43843 / 130Z), this protein is Biotin synthase.